The primary structure comprises 557 residues: Formate--tetrahydrofolate ligase (557 aa).

Residue 65–72 (TPAGEGKT) participates in ATP binding.

This sequence belongs to the formate--tetrahydrofolate ligase family.

The enzyme catalyses (6S)-5,6,7,8-tetrahydrofolate + formate + ATP = (6R)-10-formyltetrahydrofolate + ADP + phosphate. Its pathway is one-carbon metabolism; tetrahydrofolate interconversion. The sequence is that of Formate--tetrahydrofolate ligase from Methylobacterium radiotolerans (strain ATCC 27329 / DSM 1819 / JCM 2831 / NBRC 15690 / NCIMB 10815 / 0-1).